Consider the following 97-residue polypeptide: Large ribosomal subunit protein eL21 (97 aa).

This sequence belongs to the eukaryotic ribosomal protein eL21 family.

The chain is Large ribosomal subunit protein eL21 from Methanospirillum hungatei JF-1 (strain ATCC 27890 / DSM 864 / NBRC 100397 / JF-1).